A 387-amino-acid polypeptide reads, in one-letter code: uncharacterized protein (387 aa).

The protein resides in the mitochondrion. This is an uncharacterized protein from Paramecium tetraurelia.